The following is a 99-amino-acid chain: NADH-quinone oxidoreductase subunit K (99 aa).

Transmembrane regions (helical) follow at residues 3-23 (PENYLYLSVLLFTIGAAGVLL), 28-48 (IVVFMCIELMLNAANLAFVTF), and 62-82 (FFTMVVAAAEVVVGLAIIMII).

It belongs to the complex I subunit 4L family. As to quaternary structure, NDH-1 is composed of 14 different subunits. Subunits NuoA, H, J, K, L, M, N constitute the membrane sector of the complex.

The protein localises to the cell membrane. It catalyses the reaction a quinone + NADH + 5 H(+)(in) = a quinol + NAD(+) + 4 H(+)(out). NDH-1 shuttles electrons from NADH, via FMN and iron-sulfur (Fe-S) centers, to quinones in the respiratory chain. The immediate electron acceptor for the enzyme in this species is believed to be a menaquinone. Couples the redox reaction to proton translocation (for every two electrons transferred, four hydrogen ions are translocated across the cytoplasmic membrane), and thus conserves the redox energy in a proton gradient. This is NADH-quinone oxidoreductase subunit K from Rhodococcus erythropolis (strain PR4 / NBRC 100887).